The chain runs to 499 residues: Putative antiporter subunit mnhD2 (499 aa).

Helical transmembrane passes span 1 to 21 (MSNL…ILVF), 31 to 51 (ILSI…LIYV), 77 to 97 (LSLL…AYGF), 107 to 127 (FHLP…FLTS), 129 to 149 (LFNL…LVTL), 160 to 180 (IVYV…IGML), 208 to 228 (ISLV…FMWL), 239 to 259 (LAAL…IRFF), 272 to 292 (TLLV…VIAY), 307 to 327 (IGFI…GAIF), 329 to 349 (LAND…LVYM), 367 to 387 (FFGV…PFSG), 402 to 422 (GNYI…YSLF), and 449 to 469 (GLLS…PVVL).

This sequence belongs to the CPA3 antiporters (TC 2.A.63) subunit D family. In terms of assembly, may form a heterooligomeric complex that consists of seven subunits: mnhA2, mnhB2, mnhC2, mnhD2, mnhE2, mnhF2 and mnhG2.

The protein localises to the cell membrane. This is Putative antiporter subunit mnhD2 (mnhD2) from Staphylococcus epidermidis (strain ATCC 35984 / DSM 28319 / BCRC 17069 / CCUG 31568 / BM 3577 / RP62A).